We begin with the raw amino-acid sequence, 251 residues long: Pyridoxine 5'-phosphate synthase (251 aa).

Asn-7 is a binding site for 3-amino-2-oxopropyl phosphate. Residue 9-10 (DH) participates in 1-deoxy-D-xylulose 5-phosphate binding. Arg-18 is a binding site for 3-amino-2-oxopropyl phosphate. His-43 acts as the Proton acceptor in catalysis. Residues Arg-45 and His-50 each coordinate 1-deoxy-D-xylulose 5-phosphate. The Proton acceptor role is filled by Glu-73. 1-deoxy-D-xylulose 5-phosphate is bound at residue Thr-103. Catalysis depends on His-197, which acts as the Proton donor. Residues Gly-198 and 219 to 220 (GH) each bind 3-amino-2-oxopropyl phosphate.

Belongs to the PNP synthase family. Homooctamer; tetramer of dimers.

It is found in the cytoplasm. The enzyme catalyses 3-amino-2-oxopropyl phosphate + 1-deoxy-D-xylulose 5-phosphate = pyridoxine 5'-phosphate + phosphate + 2 H2O + H(+). The protein operates within cofactor biosynthesis; pyridoxine 5'-phosphate biosynthesis; pyridoxine 5'-phosphate from D-erythrose 4-phosphate: step 5/5. Catalyzes the complicated ring closure reaction between the two acyclic compounds 1-deoxy-D-xylulose-5-phosphate (DXP) and 3-amino-2-oxopropyl phosphate (1-amino-acetone-3-phosphate or AAP) to form pyridoxine 5'-phosphate (PNP) and inorganic phosphate. The sequence is that of Pyridoxine 5'-phosphate synthase from Caulobacter sp. (strain K31).